The following is a 737-amino-acid chain: Protein-glucosylgalactosylhydroxylysine glucosidase (737 aa).

300–301 (WD) provides a ligand contact to substrate. Glu-430 (proton donor) is an active-site residue. A substrate-binding site is contributed by 498 to 499 (KQ). The segment at 681–737 (RSAGRIQMSPPKLPGSSSSEFPGRTFSDVRDPLQSPLWVTLGSSSPTESLTVDPASE) is disordered. Residues 721–730 (LGSSSPTESL) show a composition bias toward polar residues.

This sequence belongs to the glycosyl hydrolase 65 family.

The catalysed reaction is (5R)-5-O-[alpha-D-glucosyl-(1-&gt;2)-beta-D-galactosyl]-5-hydroxy-L-lysyl-[collagen] + H2O = (5R)-5-O-(beta-D-galactosyl)-5-hydroxy-L-lysyl-[collagen] + D-glucose. Its function is as follows. Catalyzes the hydrolysis of glucose from the disaccharide unit linked to hydroxylysine residues of collagen and collagen-like proteins. The sequence is that of Protein-glucosylgalactosylhydroxylysine glucosidase from Homo sapiens (Human).